The chain runs to 382 residues: Homoserine O-succinyltransferase (382 aa).

The region spanning 51–359 is the AB hydrolase-1 domain; that stretch reads NAILVCHALS…EATQGHDAFL (309 aa). S157 functions as the Nucleophile in the catalytic mechanism. R227 contributes to the substrate binding site. Catalysis depends on residues D322 and H355. Position 356 (D356) interacts with substrate.

The protein belongs to the AB hydrolase superfamily. MetX family. As to quaternary structure, homodimer.

The protein resides in the cytoplasm. It catalyses the reaction L-homoserine + succinyl-CoA = O-succinyl-L-homoserine + CoA. It functions in the pathway amino-acid biosynthesis; L-methionine biosynthesis via de novo pathway; O-succinyl-L-homoserine from L-homoserine: step 1/1. Transfers a succinyl group from succinyl-CoA to L-homoserine, forming succinyl-L-homoserine. This Halorhodospira halophila (strain DSM 244 / SL1) (Ectothiorhodospira halophila (strain DSM 244 / SL1)) protein is Homoserine O-succinyltransferase.